Reading from the N-terminus, the 159-residue chain is Ribosomal RNA large subunit methyltransferase H (159 aa).

S-adenosyl-L-methionine contacts are provided by residues Leu76, Gly107, and 126-131 (LSSLTL).

Belongs to the RNA methyltransferase RlmH family. In terms of assembly, homodimer.

It is found in the cytoplasm. The enzyme catalyses pseudouridine(1915) in 23S rRNA + S-adenosyl-L-methionine = N(3)-methylpseudouridine(1915) in 23S rRNA + S-adenosyl-L-homocysteine + H(+). Functionally, specifically methylates the pseudouridine at position 1915 (m3Psi1915) in 23S rRNA. This is Ribosomal RNA large subunit methyltransferase H from Cupriavidus necator (strain ATCC 17699 / DSM 428 / KCTC 22496 / NCIMB 10442 / H16 / Stanier 337) (Ralstonia eutropha).